The chain runs to 581 residues: ATP-dependent lipid A-core flippase (581 aa).

The next 5 helical transmembrane spans lie at 15-35 (LWPIISPFKSGLIISIVALII), 62-82 (ISIWMPLAIVALMLSRGSSGF), 152-172 (IIGLFFMMFFHSWKLSSVLII), 252-272 (IIIQFISSITLAVILYISSLP), and 274-294 (IIDELTAGTITVIFTSMIALM). In terms of domain architecture, ABC transmembrane type-1 spans 27 to 309 (IISIVALIIN…LTNVNANFQK (283 aa)). Residues 341–577 (IKFKNITFTY…KGVYAQIYRL (237 aa)) enclose the ABC transporter domain. 375 to 382 (GSSGAGKS) contributes to the ATP binding site.

It belongs to the ABC transporter superfamily. Lipid exporter (TC 3.A.1.106) family. In terms of assembly, homodimer.

The protein resides in the cell membrane. The catalysed reaction is ATP + H2O + lipid A-core oligosaccharideSide 1 = ADP + phosphate + lipid A-core oligosaccharideSide 2.. Its function is as follows. Involved in lipopolysaccharide (LPS) biosynthesis. Translocates lipid A-core from the inner to the outer leaflet of the inner membrane. Transmembrane domains (TMD) form a pore in the inner membrane and the ATP-binding domain (NBD) is responsible for energy generation. The polypeptide is ATP-dependent lipid A-core flippase (Wigglesworthia glossinidia brevipalpis).